Consider the following 171-residue polypeptide: Ribosome maturation factor RimM (171 aa).

In terms of domain architecture, PRC barrel spans 97 to 170 (EGEYYYHEVI…QVTIHVMEGL (74 aa)).

The protein belongs to the RimM family. As to quaternary structure, binds ribosomal protein uS19.

It localises to the cytoplasm. Functionally, an accessory protein needed during the final step in the assembly of 30S ribosomal subunit, possibly for assembly of the head region. Essential for efficient processing of 16S rRNA. May be needed both before and after RbfA during the maturation of 16S rRNA. It has affinity for free ribosomal 30S subunits but not for 70S ribosomes. This Bacillus cytotoxicus (strain DSM 22905 / CIP 110041 / 391-98 / NVH 391-98) protein is Ribosome maturation factor RimM.